The chain runs to 101 residues: Small ribosomal subunit protein uS14 (101 aa).

The protein belongs to the universal ribosomal protein uS14 family. In terms of assembly, part of the 30S ribosomal subunit. Contacts proteins S3 and S10.

Binds 16S rRNA, required for the assembly of 30S particles and may also be responsible for determining the conformation of the 16S rRNA at the A site. In Shewanella oneidensis (strain ATCC 700550 / JCM 31522 / CIP 106686 / LMG 19005 / NCIMB 14063 / MR-1), this protein is Small ribosomal subunit protein uS14.